The chain runs to 213 residues: Ribonuclease HII (213 aa).

In terms of domain architecture, RNase H type-2 spans 1-206 (MICGVDEAGK…VSTLLAKKTQ (206 aa)). A divalent metal cation is bound by residues Asp6, Glu7, and Asp101.

Belongs to the RNase HII family. The cofactor is Mn(2+). Mg(2+) is required as a cofactor.

Its subcellular location is the cytoplasm. It catalyses the reaction Endonucleolytic cleavage to 5'-phosphomonoester.. Its function is as follows. Endonuclease that specifically degrades the RNA of RNA-DNA hybrids. This is Ribonuclease HII from Methanoregula boonei (strain DSM 21154 / JCM 14090 / 6A8).